A 275-amino-acid chain; its full sequence is Glutamate racemase (275 aa).

Substrate-binding positions include 12-13 (DS) and 44-45 (YG). Residue Cys75 is the Proton donor/acceptor of the active site. Substrate is bound at residue 76–77 (NT). Cys185 serves as the catalytic Proton donor/acceptor. Residue 186 to 187 (TH) coordinates substrate.

It belongs to the aspartate/glutamate racemases family.

The enzyme catalyses L-glutamate = D-glutamate. The protein operates within cell wall biogenesis; peptidoglycan biosynthesis. Its function is as follows. Provides the (R)-glutamate required for cell wall biosynthesis. The protein is Glutamate racemase of Mycobacterium avium (strain 104).